The sequence spans 396 residues: Putative F-box protein At4g22660 (396 aa).

Residues 7–58 (PNTWSDLPLDLLNLVFKRLSFANFRQAKSVCSSWYSASKQSVPKNQIPWLML) form the F-box domain.

The chain is Putative F-box protein At4g22660 from Arabidopsis thaliana (Mouse-ear cress).